The sequence spans 68 residues: Large ribosomal subunit protein bL35 (68 aa).

This sequence belongs to the bacterial ribosomal protein bL35 family.

The chain is Large ribosomal subunit protein bL35 from Orientia tsutsugamushi (strain Ikeda) (Rickettsia tsutsugamushi).